A 133-amino-acid polypeptide reads, in one-letter code: Small ribosomal subunit protein uS9 (133 aa).

Residues 97-113 show a composition bias toward basic and acidic residues; sequence SKQELKSHGFLTRDPRK. A disordered region spans residues 97-133; that stretch reads SKQELKSHGFLTRDPRKKERKKYGHKKARKSFQFSKR. Basic residues predominate over residues 114 to 133; it reads KERKKYGHKKARKSFQFSKR.

The protein belongs to the universal ribosomal protein uS9 family.

This is Small ribosomal subunit protein uS9 from Chlamydia abortus (strain DSM 27085 / S26/3) (Chlamydophila abortus).